The sequence spans 124 residues: Ragulator complex protein LAMTOR3 (124 aa).

The segment at threonine 57–serine 70 is required for interaction with LAMTOR2.

It belongs to the LAMTOR3 family. In terms of assembly, part of the Ragulator complex composed of LAMTOR1, LAMTOR2, LAMTOR3, LAMTOR4 and LAMTOR5. LAMTOR4 and LAMTOR5 form a heterodimer that interacts, through LAMTOR1, with a LAMTOR2, LAMTOR3 heterodimer. Interacts with LAMTOR1 and LAMTOR2; the interaction is direct. The Ragulator complex interacts with both the mTORC1 complex and heterodimers constituted of the Rag GTPases RagA/RRAGA, RagB/RRAGB, RagC/RRAGC and RagD/RRAGD; regulated by amino acid availability. The Ragulator complex interacts with SLC38A9; the probable amino acid sensor. Component of the lysosomal folliculin complex (LFC), composed of FLCN, FNIP1 (or FNIP2), RagA/RRAGA or RagB/RRAGB GDP-bound, RagC/RRAGC or RagD/RRAGD GTP-bound, and Ragulator. Interacts with MAP2K1/MEK1 and MAPK2. Interacts with MORG1.

The protein localises to the late endosome membrane. In terms of biological role, as part of the Ragulator complex it is involved in amino acid sensing and activation of mTORC1, a signaling complex promoting cell growth in response to growth factors, energy levels, and amino acids. Activated by amino acids through a mechanism involving the lysosomal V-ATPase, the Ragulator plays a dual role for the small GTPases Rag (RagA/RRAGA, RagB/RRAGB, RagC/RRAGC and/or RagD/RRAGD): it (1) acts as a guanine nucleotide exchange factor (GEF), activating the small GTPases Rag and (2) mediates recruitment of Rag GTPases to the lysosome membrane. Activated Ragulator and Rag GTPases function as a scaffold recruiting mTORC1 to lysosomes where it is in turn activated. Adapter protein that enhances the efficiency of the MAP kinase cascade facilitating the activation of MAPK2. The sequence is that of Ragulator complex protein LAMTOR3 from Homo sapiens (Human).